Consider the following 307-residue polypeptide: tRNA dimethylallyltransferase (307 aa).

6–13 (GATATGKT) is an ATP binding site. 8–13 (TATGKT) is a substrate binding site. Residues 31 to 34 (DSMM) form an interaction with substrate tRNA region.

It belongs to the IPP transferase family. As to quaternary structure, monomer. The cofactor is Mg(2+).

The catalysed reaction is adenosine(37) in tRNA + dimethylallyl diphosphate = N(6)-dimethylallyladenosine(37) in tRNA + diphosphate. Functionally, catalyzes the transfer of a dimethylallyl group onto the adenine at position 37 in tRNAs that read codons beginning with uridine, leading to the formation of N6-(dimethylallyl)adenosine (i(6)A). This chain is tRNA dimethylallyltransferase, found in Sulfurihydrogenibium sp. (strain YO3AOP1).